Reading from the N-terminus, the 370-residue chain is Protein-tyrosine sulfotransferase 1 (370 aa).

Residues 1–8 lie on the Cytoplasmic side of the membrane; that stretch reads MVGKLKQN. Residues 9–25 traverse the membrane as a helical; Signal-anchor for type II membrane protein segment; it reads LLLACLVISSVTVFYLG. Over 26–370 the chain is Lumenal; that stretch reads QHAMECHHRI…KEKPQTEQVE (345 aa). A glycan (N-linked (GlcNAc...) asparagine) is linked at N60. Position 79–83 (79–83) interacts with 3'-phosphoadenylyl sulfate; that stretch reads RSGTT. C97 and C157 form a disulfide bridge. Residue E100 is the Proton donor/acceptor of the active site. The interval 102-106 is interaction with peptide substrate; sequence RVIPR. 3 residues coordinate 3'-phosphoadenylyl sulfate: R184, S192, and R196. C226 and C234 form a disulfide bridge. Y239 is a 3'-phosphoadenylyl sulfate binding site. N262 is a glycosylation site (N-linked (GlcNAc...) asparagine). 3'-phosphoadenylyl sulfate is bound by residues 286-295 and K301; that span reads STDQVIKPVN.

It belongs to the protein sulfotransferase family. As to quaternary structure, homodimer. Can also form heterodimers with TPST2. Post-translationally, N-glycosylated.

It localises to the golgi apparatus membrane. The enzyme catalyses L-tyrosyl-[protein] + 3'-phosphoadenylyl sulfate = O-sulfo-L-tyrosine-[protein] + adenosine 3',5'-bisphosphate + H(+). Catalyzes the O-sulfation of tyrosine residues within acidic motifs of polypeptides, using 3'-phosphoadenylyl sulfate (PAPS) as cosubstrate. This is Protein-tyrosine sulfotransferase 1 (Tpst1) from Rattus norvegicus (Rat).